A 142-amino-acid polypeptide reads, in one-letter code: MKTLSAKPAEVQHDWFVVDATGKTLGRLATEIARRLRGKHKTSYTPHVDTGDYIIVINAEQVQVTGNKALDKKYYRHTEFPGGLKETNFEKLVAHKPEEIFERAVKGMLPKGPLGYAMIKKMKVYAGSEHPHAAQQPQVLDI.

The protein belongs to the universal ribosomal protein uL13 family. As to quaternary structure, part of the 50S ribosomal subunit.

Functionally, this protein is one of the early assembly proteins of the 50S ribosomal subunit, although it is not seen to bind rRNA by itself. It is important during the early stages of 50S assembly. This Acinetobacter baumannii (strain AB0057) protein is Large ribosomal subunit protein uL13.